We begin with the raw amino-acid sequence, 132 residues long: Small ribosomal subunit protein uS8 (132 aa).

The protein belongs to the universal ribosomal protein uS8 family. Part of the 30S ribosomal subunit. Contacts proteins S5 and S12.

Functionally, one of the primary rRNA binding proteins, it binds directly to 16S rRNA central domain where it helps coordinate assembly of the platform of the 30S subunit. The chain is Small ribosomal subunit protein uS8 from Rhizobium meliloti (strain 1021) (Ensifer meliloti).